A 525-amino-acid chain; its full sequence is GMP synthase [glutamine-hydrolyzing] (525 aa).

The Glutamine amidotransferase type-1 domain maps to 16-205 (PVLVVDFGAQ…LHDFAGLGAQ (190 aa)). Cys93 functions as the Nucleophile in the catalytic mechanism. Active-site residues include His179 and Glu181. Positions 206-399 (WTPANIANAL…LGLPEEIVAR (194 aa)) constitute a GMPS ATP-PPase domain. Position 233 to 239 (233 to 239 (SGGVDSA)) interacts with ATP.

As to quaternary structure, homodimer.

The catalysed reaction is XMP + L-glutamine + ATP + H2O = GMP + L-glutamate + AMP + diphosphate + 2 H(+). It participates in purine metabolism; GMP biosynthesis; GMP from XMP (L-Gln route): step 1/1. In terms of biological role, catalyzes the synthesis of GMP from XMP. The polypeptide is GMP synthase [glutamine-hydrolyzing] (Mycobacterium bovis (strain BCG / Pasteur 1173P2)).